The following is a 286-amino-acid chain: L-ribulose 3-epimerase (286 aa).

Residues histidine 12, serine 69, glutamate 152, and glutamate 158 each coordinate D-allulose. The D-fructose site is built by histidine 12, serine 69, glutamate 152, and glutamate 158. The active-site Proton donor/acceptor is the glutamate 152. Glutamate 152 lines the Mn(2+) pocket. Residue aspartate 185 coordinates Mn(2+). Residues histidine 188, histidine 211, arginine 217, and glutamate 246 each contribute to the D-allulose site. 4 residues coordinate D-fructose: histidine 188, histidine 211, arginine 217, and glutamate 246. Histidine 211 provides a ligand contact to Mn(2+). Catalysis depends on glutamate 246, which acts as the Proton donor/acceptor. Glutamate 246 provides a ligand contact to Mn(2+).

Belongs to the hyi family. Homodimer. Mn(2+) serves as cofactor.

The catalysed reaction is L-ribulose = L-xylulose. It carries out the reaction D-ribulose = D-xylulose. The enzyme catalyses D-allulose = keto-D-fructose. It catalyses the reaction keto-L-tagatose = keto-L-sorbose. The catalysed reaction is keto-D-tagatose = keto-D-sorbose. In terms of biological role, catalyzes the epimerization of various ketoses at the C(3) position. Exhibits the highest enzymatic activity toward L-ribulose, followed by D-ribulose, D-allulose and D-fructose. Shows lower activity with L-xylulose, L-tagatose, D-xylulose, D-tagatose, L-sorbose, D-sorbose, and weak activity with L-allulose and L-fructose. This Methylomonas sp. (strain DH-1) protein is L-ribulose 3-epimerase.